Consider the following 312-residue polypeptide: Acetyl-coenzyme A carboxylase carboxyl transferase subunit alpha (312 aa).

The region spanning 36–286 is the CoA carboxyltransferase C-terminal domain; that stretch reads NLEKEISKTY…ADYVKKSLNE (251 aa).

Belongs to the AccA family. In terms of assembly, acetyl-CoA carboxylase is a heterohexamer composed of biotin carboxyl carrier protein (AccB), biotin carboxylase (AccC) and two subunits each of ACCase subunit alpha (AccA) and ACCase subunit beta (AccD).

It is found in the cytoplasm. The catalysed reaction is N(6)-carboxybiotinyl-L-lysyl-[protein] + acetyl-CoA = N(6)-biotinyl-L-lysyl-[protein] + malonyl-CoA. Its pathway is lipid metabolism; malonyl-CoA biosynthesis; malonyl-CoA from acetyl-CoA: step 1/1. Functionally, component of the acetyl coenzyme A carboxylase (ACC) complex. First, biotin carboxylase catalyzes the carboxylation of biotin on its carrier protein (BCCP) and then the CO(2) group is transferred by the carboxyltransferase to acetyl-CoA to form malonyl-CoA. This is Acetyl-coenzyme A carboxylase carboxyl transferase subunit alpha from Campylobacter jejuni subsp. jejuni serotype O:6 (strain 81116 / NCTC 11828).